The following is a 186-amino-acid chain: Cytochrome c oxidase subunit 4, mitochondrial (186 aa).

A mitochondrion-targeting transit peptide spans 1-31; it reads MLLSRTAVAVARRATAAPALRRSIATTVVRC. Residues cysteine 118, histidine 126, cysteine 142, and cysteine 145 each coordinate Zn(2+).

Belongs to the cytochrome c oxidase subunit 5B family. As to quaternary structure, component of the cytochrome c oxidase (complex IV, CIV), a multisubunit enzyme composed of 11 subunits. The complex is composed of a catalytic core of 3 subunits Cox1, Cox2 and Cox3, encoded in the mitochondrial DNA, and 8 supernumerary subunits Cox4, Cox5a/Cox5, Cox6, Cox7, Cox8, Cox7a/Cox9, Cox6b/Cox12 and Cox6a/Cox13, which are encoded in the nuclear genome. The complex exists as a monomer or a dimer and forms respiratory supercomplexes (SCs) in the inner mitochondrial membrane with NADH-ubiquinone oxidoreductase (complex I, CI) and ubiquinol-cytochrome c oxidoreductase (cytochrome b-c1 complex, complex III, CIII), resulting in various different assemblies (supercomplexes I(1)IV(1), I(1)III(3)IV(2), III(2)IV(1) and III(2)IV(2) as well as larger supercomplexes of compositions like I(1)III(2)IV(5-6)).

The protein localises to the mitochondrion inner membrane. It participates in energy metabolism; oxidative phosphorylation. In terms of biological role, component of the cytochrome c oxidase, the last enzyme in the mitochondrial electron transport chain which drives oxidative phosphorylation. The respiratory chain contains 3 multisubunit complexes succinate dehydrogenase (complex II, CII), ubiquinol-cytochrome c oxidoreductase (cytochrome b-c1 complex, complex III, CIII) and cytochrome c oxidase (complex IV, CIV), that cooperate to transfer electrons derived from NADH and succinate to molecular oxygen, creating an electrochemical gradient over the inner membrane that drives transmembrane transport and the ATP synthase. Cytochrome c oxidase is the component of the respiratory chain that catalyzes the reduction of oxygen to water. Electrons originating from reduced cytochrome c in the intermembrane space (IMS) are transferred via the dinuclear copper A center (CU(A)) of Cox2 and heme A of Cox1 to the active site in Cox1, a binuclear center (BNC) formed by heme A3 and copper B (CU(B)). The BNC reduces molecular oxygen to 2 water molecules using 4 electrons from cytochrome c in the IMS and 4 protons from the mitochondrial matrix. This chain is Cytochrome c oxidase subunit 4, mitochondrial (cox-4), found in Neurospora crassa (strain ATCC 24698 / 74-OR23-1A / CBS 708.71 / DSM 1257 / FGSC 987).